The chain runs to 511 residues: Cytochrome P450 26B1 (511 aa).

Cys-440 is a heme binding site.

It belongs to the cytochrome P450 family. Requires heme as cofactor.

It localises to the endoplasmic reticulum membrane. The protein localises to the microsome membrane. The catalysed reaction is all-trans-retinoate + reduced [NADPH--hemoprotein reductase] + O2 = all-trans-4-hydroxyretinoate + oxidized [NADPH--hemoprotein reductase] + H2O + H(+). The enzyme catalyses all-trans-retinoate + reduced [NADPH--hemoprotein reductase] + O2 = all-trans-18-hydroxyretinoate + oxidized [NADPH--hemoprotein reductase] + H2O + H(+). Functionally, a cytochrome P450 monooxygenase involved in the metabolism of retinoates (RAs), the active metabolites of vitamin A, and critical signaling molecules in animals. RAs exist as at least four different isomers: all-trans-RA (atRA), 9-cis-RA, 13-cis-RA, and 9,13-dicis-RA, where atRA is considered to be the biologically active isomer, although 9-cis-RA and 13-cis-RA also have activity. Catalyzes the hydroxylation of atRA primarily at C-4 and C-18, thereby contributing to the regulation of atRA homeostasis and signaling. Hydroxylation of atRA limits its biological activity and initiates a degradative process leading to its eventual elimination. Involved in the convertion of atRA to all-trans-4-oxo-RA. Can oxidize all-trans-13,14-dihydroretinoate (DRA) to metabolites which could include all-trans-4-oxo-DRA, all-trans-4-hydroxy-DRA, all-trans-5,8-epoxy-DRA, and all-trans-18-hydroxy-DRA. The protein is Cytochrome P450 26B1 (cyp26b1) of Xenopus tropicalis (Western clawed frog).